Here is a 357-residue protein sequence, read N- to C-terminus: Outer membrane protein YedS (357 aa).

The signal sequence occupies residues 1–21; it reads MKRKVLAMLVPALLVAGAANA.

Belongs to the Gram-negative porin family.

The protein resides in the cell outer membrane. Forms pores that allow passive diffusion of small molecules across the outer membrane. Plays a role in resistance to carbapenems; this carbapenem-resistant, noncarbapenemase-producing clinical isolate has a deletion in ompF and a mutated marR gene that does not induce expression of this protein. However if this gene is overexpressed, or if wild-type marR is introduced, this leads to decreased resistance to the carbapenem antibiotics ertapenem, imipenem and meropenem. This chain is Outer membrane protein YedS, found in Escherichia coli.